The chain runs to 97 residues: Integration host factor subunit alpha (97 aa).

This sequence belongs to the bacterial histone-like protein family. Heterodimer of an alpha and a beta chain.

Its function is as follows. This protein is one of the two subunits of integration host factor, a specific DNA-binding protein that functions in genetic recombination as well as in transcriptional and translational control. The chain is Integration host factor subunit alpha from Hydrogenovibrio crunogenus (strain DSM 25203 / XCL-2) (Thiomicrospira crunogena).